A 148-amino-acid polypeptide reads, in one-letter code: Auxin-responsive protein SAUR65 (148 aa).

It belongs to the ARG7 family.

It is found in the cell membrane. May promote auxin-stimulated organ elongation, such as hypocotyls, stamen filaments and petals. The chain is Auxin-responsive protein SAUR65 from Arabidopsis thaliana (Mouse-ear cress).